We begin with the raw amino-acid sequence, 161 residues long: 2-C-methyl-D-erythritol 2,4-cyclodiphosphate synthase (161 aa).

A divalent metal cation-binding residues include Asp11 and His13. 4-CDP-2-C-methyl-D-erythritol 2-phosphate is bound by residues 11-13 and 37-38; these read DIH and HS. A divalent metal cation is bound at residue His45. Residues 59–61, 135–138, and Arg145 contribute to the 4-CDP-2-C-methyl-D-erythritol 2-phosphate site; these read DIG and TTNE.

It belongs to the IspF family. In terms of assembly, homotrimer. Requires a divalent metal cation as cofactor.

The enzyme catalyses 4-CDP-2-C-methyl-D-erythritol 2-phosphate = 2-C-methyl-D-erythritol 2,4-cyclic diphosphate + CMP. The protein operates within isoprenoid biosynthesis; isopentenyl diphosphate biosynthesis via DXP pathway; isopentenyl diphosphate from 1-deoxy-D-xylulose 5-phosphate: step 4/6. Involved in the biosynthesis of isopentenyl diphosphate (IPP) and dimethylallyl diphosphate (DMAPP), two major building blocks of isoprenoid compounds. Catalyzes the conversion of 4-diphosphocytidyl-2-C-methyl-D-erythritol 2-phosphate (CDP-ME2P) to 2-C-methyl-D-erythritol 2,4-cyclodiphosphate (ME-CPP) with a corresponding release of cytidine 5-monophosphate (CMP). The sequence is that of 2-C-methyl-D-erythritol 2,4-cyclodiphosphate synthase from Synechocystis sp. (strain ATCC 27184 / PCC 6803 / Kazusa).